A 93-amino-acid polypeptide reads, in one-letter code: UPF0457 protein GTNG_2792 (93 aa).

This sequence belongs to the UPF0457 family.

The chain is UPF0457 protein GTNG_2792 from Geobacillus thermodenitrificans (strain NG80-2).